The following is a 44-amino-acid chain: Cytochrome b559 subunit beta (44 aa).

A helical transmembrane segment spans residues 19-35; the sequence is WLAVHTLGVPTVFFLGA. Heme is bound at residue His-23.

The protein belongs to the PsbE/PsbF family. Heterodimer of an alpha subunit and a beta subunit. PSII is composed of 1 copy each of membrane proteins PsbA, PsbB, PsbC, PsbD, PsbE, PsbF, PsbH, PsbI, PsbJ, PsbK, PsbL, PsbM, PsbT, PsbX, PsbY, PsbZ, Psb30/Ycf12, peripheral proteins PsbO, CyanoQ (PsbQ), PsbU, PsbV and a large number of cofactors. It forms dimeric complexes. Heme b is required as a cofactor.

It localises to the cellular thylakoid membrane. Functionally, this b-type cytochrome is tightly associated with the reaction center of photosystem II (PSII). PSII is a light-driven water:plastoquinone oxidoreductase that uses light energy to abstract electrons from H(2)O, generating O(2) and a proton gradient subsequently used for ATP formation. It consists of a core antenna complex that captures photons, and an electron transfer chain that converts photonic excitation into a charge separation. The polypeptide is Cytochrome b559 subunit beta (Trichodesmium erythraeum (strain IMS101)).